A 704-amino-acid polypeptide reads, in one-letter code: Polyribonucleotide nucleotidyltransferase (704 aa).

Mg(2+) is bound by residues D488 and D494. The KH domain maps to 555 to 614 (PRITTLKINPEKIRDVIGKGGATIRALTEETGTTIELEDDGTVKIASANGDATKEAIRRI). The S1 motif domain occupies 624 to 692 (GTIYNGKVVR…RQGRVRLSMK (69 aa)).

It belongs to the polyribonucleotide nucleotidyltransferase family. In terms of assembly, component of the RNA degradosome, which is a multiprotein complex involved in RNA processing and mRNA degradation. Mg(2+) is required as a cofactor.

The protein localises to the cytoplasm. It carries out the reaction RNA(n+1) + phosphate = RNA(n) + a ribonucleoside 5'-diphosphate. In terms of biological role, involved in mRNA degradation. Catalyzes the phosphorolysis of single-stranded polyribonucleotides processively in the 3'- to 5'-direction. This is Polyribonucleotide nucleotidyltransferase from Shewanella sediminis (strain HAW-EB3).